Consider the following 242-residue polypeptide: MATVSMRDMLKAGVHFGHQTRYWNPKMKPFIFGARNRVHIINLEKTVPMFNEALAELVKVGEKKGKVLFVGTKRAASEAVKEAAIASNQYYVNNRWLGGMLTNYKTVRQSIKRLKELEVQSTDGTFDKLTKKEALMRTREMEKLEKSLGGIKDMGGLPDALFVIDADHEHIAIKEANNLGIPVFAVVDTNSNPDGVDYIIPGNDDAIRAVQLYLNAAASSLTEGRNKDVAAVAEKDGFVEAE.

The protein belongs to the universal ribosomal protein uS2 family.

The polypeptide is Small ribosomal subunit protein uS2 (Vibrio vulnificus (strain CMCP6)).